A 355-amino-acid chain; its full sequence is Uroporphyrinogen decarboxylase (355 aa).

Substrate is bound by residues 27–31 (RQAGR), Asp-77, Tyr-154, Thr-209, and His-327.

The protein belongs to the uroporphyrinogen decarboxylase family. As to quaternary structure, homodimer.

It localises to the cytoplasm. The catalysed reaction is uroporphyrinogen III + 4 H(+) = coproporphyrinogen III + 4 CO2. It functions in the pathway porphyrin-containing compound metabolism; protoporphyrin-IX biosynthesis; coproporphyrinogen-III from 5-aminolevulinate: step 4/4. Catalyzes the decarboxylation of four acetate groups of uroporphyrinogen-III to yield coproporphyrinogen-III. The sequence is that of Uroporphyrinogen decarboxylase from Tolumonas auensis (strain DSM 9187 / NBRC 110442 / TA 4).